A 1558-amino-acid chain; its full sequence is ABC transporter NFT1 (1558 aa).

Topologically, residues 1–29 (MIKNGTCPYWERDDLSECARREYIEFKFP) are extracellular. Asn-4 carries N-linked (GlcNAc...) asparagine glycosylation. A helical membrane pass occupies residues 30-50 (LFILLTGMIYAFCKVFRAFYL). Residues 51-103 (RGKNHTNEAPEFEEQGNGNHEYARFSVLRLKSAWESRSFCNVNNRSTFDKFKK) lie on the Cytoplasmic side of the membrane. The helical transmembrane segment at 104 to 124 (FIEGAFIVLQLTIHLYILSSM) threads the bilayer. Topologically, residues 125 to 130 (PMDNKK) are extracellular. Residues 131–151 (FFHQGFLVQMFLWILLLVVIT) traverse the membrane as a helical segment. At 152–169 (LRLISASQSFRWVLACKR) the chain is on the cytoplasmic side. Residues 170 to 190 (DLWAVSFYSYASLFTLSILPL) traverse the membrane as a helical segment. Residues 191 to 201 (RSVFIGKIKDK) are Extracellular-facing. The helical transmembrane segment at 202 to 222 (IMVKYIISETFIDLALLLLLS) threads the bilayer. The Cytoplasmic segment spans residues 223–302 (TSSIEGTRYS…SSKKGRLLPN (80 aa)). Residues 303 to 323 (IICYFKAVFISQLFLAFVSSF) form a helical membrane-spanning segment. Residues 311–621 (FISQLFLAFV…IASTVSLLIQ (311 aa)) form the ABC transmembrane type-1 1 domain. Residues 324–351 (LNFVPSLLMPRILSYVNDPKSKSWNLVS) lie on the Extracellular side of the membrane. Residues 352–374 (LYVSSMLVSKIIATTCRGQGLFL) form a helical membrane-spanning segment. Over 375 to 449 (GEKGTMQLRT…VMSIDAFKVS (75 aa)) the chain is Cytoplasmic. The tract at residues 410–434 (NASTSFEENPDSSEAEPRKKSSRKD) is disordered. A compositionally biased stretch (basic and acidic residues) spans 424 to 434 (AEPRKKSSRKD). The helical transmembrane segment at 450-470 (EAMNTFYLACEAVFMTVTALM) threads the bilayer. The Extracellular portion of the chain corresponds to 471 to 481 (ILYSLLGWSAF). A helical membrane pass occupies residues 482–504 (AGTFALLAMIPLNFWCATFYGNY). Topologically, residues 505–558 (QADQLILTDKRTSGISEALNSIRVIKLLAWENLFYQKIINVRDGEIRLLKKKAT) are cytoplasmic. The chain crosses the membrane as a helical span at residues 559-579 (IFFLNHLIWFFGPTLVSAITF). Residues 580–584 (SVFIK) lie on the Extracellular side of the membrane. A helical transmembrane segment spans residues 585-605 (FQNQTLTPTIAFTALSLFAIL). Residues 606 to 953 (RTPMDQIAST…KFSAYKWLAD (348 aa)) lie on the Cytoplasmic side of the membrane. One can recognise an ABC transporter 1 domain in the interval 651 to 892 (FGFEDASMEW…NEFLRESINN (242 aa)). 686–693 (GPTGSGKS) serves as a coordination point for ATP. Residues 892 to 901 (NDSKNTTHNQ) show a composition bias toward polar residues. Residues 892–926 (NDSKNTTHNQIDLKRSTTSKKTKNGDPEGGNSQDE) are disordered. Residues 954 to 974 (YFGGLGVVFVFTSSSILIHGI) form a helical membrane-spanning segment. The ABC transmembrane type-1 2 domain maps to 961 to 1251 (VFVFTSSSIL…IIKVFSSVEL (291 aa)). The Extracellular portion of the chain corresponds to 975 to 1013 (TLSQGFWLRYWLDTGSSGSKSTWLYRIVEGHSNIYFLLT). A helical membrane pass occupies residues 1014-1034 (YIIIGLVSSFLTSGKVWIAII). The Cytoplasmic segment spans residues 1035-1082 (SGTNVTKKIFAKLLSSILYAKLRFHNVTPTGRIMNRFSKDMDIIDQQL). A helical transmembrane segment spans residues 1083-1105 (IPNFEGLSYSVVVCLWIILLIGY). Over 1106–1109 (VTPQ) the chain is Extracellular. A helical membrane pass occupies residues 1110 to 1132 (FLLFAIPLCALYYTVCTLYLRAS). At 1133–1199 (RELKRIDNIN…ATEWITYRVD (67 aa)) the chain is on the cytoplasmic side. Residues 1200–1220 (IIGTLVLFSSSVMIIMKASYL) traverse the membrane as a helical segment. The Extracellular segment spans residues 1221–1222 (DA). The helical transmembrane segment at 1223-1243 (GLAGILLSNAFSFTETAQWII) threads the bilayer. Residues 1244-1558 (KVFSSVELLM…LAKVSFDNKR (315 aa)) lie on the Cytoplasmic side of the membrane. Residues 1285 to 1538 (VELKNLSLRY…RNTIFYRLCR (254 aa)) form the ABC transporter 2 domain. 1319–1326 (GRTGAGKS) contributes to the ATP binding site.

This sequence belongs to the ABC transporter superfamily. ABCC family. Conjugate transporter (TC 3.A.1.208) subfamily.

It localises to the membrane. The chain is ABC transporter NFT1 (NFT1) from Saccharomyces cerevisiae (Baker's yeast).